A 218-amino-acid chain; its full sequence is Cytidylate kinase (218 aa).

Residue 10-18 (GPAAAGKST) coordinates ATP.

The protein belongs to the cytidylate kinase family. Type 1 subfamily.

The protein resides in the cytoplasm. It catalyses the reaction CMP + ATP = CDP + ADP. It carries out the reaction dCMP + ATP = dCDP + ADP. The protein is Cytidylate kinase of Staphylococcus haemolyticus (strain JCSC1435).